Here is a 313-residue protein sequence, read N- to C-terminus: tRNA (guanine-N(7)-)-methyltransferase (313 aa).

Residues glutamate 33, glutamate 58, and aspartate 85 each contribute to the S-adenosyl-L-methionine site. Substrate contacts are provided by residues lysine 112, aspartate 144, and 177 to 180 (TRYE).

The protein belongs to the class I-like SAM-binding methyltransferase superfamily. TrmB family.

The enzyme catalyses guanosine(46) in tRNA + S-adenosyl-L-methionine = N(7)-methylguanosine(46) in tRNA + S-adenosyl-L-homocysteine. It functions in the pathway tRNA modification; N(7)-methylguanine-tRNA biosynthesis. Catalyzes the formation of N(7)-methylguanine at position 46 (m7G46) in tRNA. This chain is tRNA (guanine-N(7)-)-methyltransferase, found in Thermotoga maritima (strain ATCC 43589 / DSM 3109 / JCM 10099 / NBRC 100826 / MSB8).